Reading from the N-terminus, the 483-residue chain is Isocitrate dehydrogenase [NADP] (483 aa).

Thr-74 serves as a coordination point for NADP(+). D-threo-isocitrate is bound by residues Ser-83, Asn-85, Arg-89, Arg-99, and Arg-121. Residue Asp-232 coordinates Mg(2+). NADP(+) is bound by residues His-264–Ile-270 and Asn-277.

It belongs to the isocitrate and isopropylmalate dehydrogenases family. As to quaternary structure, homodimer. Mg(2+) is required as a cofactor. Requires Mn(2+) as cofactor.

The catalysed reaction is D-threo-isocitrate + NADP(+) = 2-oxoglutarate + CO2 + NADPH. Its function is as follows. Catalyzes the oxidative decarboxylation of isocitrate to 2-oxoglutarate and carbon dioxide with the concomitant reduction of NADP(+). The chain is Isocitrate dehydrogenase [NADP] (icd) from Rickettsia felis (strain ATCC VR-1525 / URRWXCal2) (Rickettsia azadi).